The primary structure comprises 361 residues: Phospho-N-acetylmuramoyl-pentapeptide-transferase (361 aa).

10 consecutive transmembrane segments (helical) span residues 25–45, 71–91, 94–114, 133–153, 169–189, 200–220, 240–260, 264–284, 289–309, and 338–358; these read TGGA…WIID, TPTM…VLWA, LNPY…VGFY, WRLL…VRLG, VAIN…VGAG, GLAI…SYLA, LSVL…FNAP, IFMG…IAVA, IVLA…IVQV, and QIVI…LSTL.

The protein belongs to the glycosyltransferase 4 family. MraY subfamily. It depends on Mg(2+) as a cofactor.

It is found in the cell inner membrane. It carries out the reaction UDP-N-acetyl-alpha-D-muramoyl-L-alanyl-gamma-D-glutamyl-meso-2,6-diaminopimeloyl-D-alanyl-D-alanine + di-trans,octa-cis-undecaprenyl phosphate = di-trans,octa-cis-undecaprenyl diphospho-N-acetyl-alpha-D-muramoyl-L-alanyl-D-glutamyl-meso-2,6-diaminopimeloyl-D-alanyl-D-alanine + UMP. It functions in the pathway cell wall biogenesis; peptidoglycan biosynthesis. Catalyzes the initial step of the lipid cycle reactions in the biosynthesis of the cell wall peptidoglycan: transfers peptidoglycan precursor phospho-MurNAc-pentapeptide from UDP-MurNAc-pentapeptide onto the lipid carrier undecaprenyl phosphate, yielding undecaprenyl-pyrophosphoryl-MurNAc-pentapeptide, known as lipid I. The protein is Phospho-N-acetylmuramoyl-pentapeptide-transferase of Rhodopseudomonas palustris (strain BisB18).